The primary structure comprises 204 residues: Guanylate kinase (204 aa).

The 179-residue stretch at 4–182 folds into the Guanylate kinase-like domain; it reads GMLVVVSGPS…AVNDLEAVLT (179 aa). Residue 11-18 participates in ATP binding; sequence GPSGAGKG.

This sequence belongs to the guanylate kinase family.

The protein resides in the cytoplasm. It carries out the reaction GMP + ATP = GDP + ADP. Its function is as follows. Essential for recycling GMP and indirectly, cGMP. This is Guanylate kinase from Carboxydothermus hydrogenoformans (strain ATCC BAA-161 / DSM 6008 / Z-2901).